Reading from the N-terminus, the 74-residue chain is RNA-binding protein Hfq (74 aa).

Positions 9–69 (DQYLNQLRKN…ISTFSPVKNV (61 aa)) constitute a Sm domain.

It belongs to the Hfq family. As to quaternary structure, homohexamer.

In terms of biological role, RNA chaperone that binds small regulatory RNA (sRNAs) and mRNAs to facilitate mRNA translational regulation in response to envelope stress, environmental stress and changes in metabolite concentrations. Also binds with high specificity to tRNAs. This Oceanobacillus iheyensis (strain DSM 14371 / CIP 107618 / JCM 11309 / KCTC 3954 / HTE831) protein is RNA-binding protein Hfq.